Consider the following 139-residue polypeptide: MSKKIIYFLCTGNSCRSQMAEGWGKKILGEEWDVYSAGIEAHGLNPNAIKAMREVDIDITNQTSDQIDKDILNKADFVVTLCGDAKDKCPMTPPHVKRDHWGFEDPAKAQGTEEEKWTVFQQVRDKIGDRIKVFAKTGE.

Catalysis depends on nucleophile residues Cys-10, Cys-82, and Cys-89. 2 disulfide bridges follow: Cys-10/Cys-82 and Cys-82/Cys-89.

The protein belongs to the low molecular weight phosphotyrosine protein phosphatase family. Thioredoxin-coupled ArsC subfamily.

It localises to the cytoplasm. It carries out the reaction arsenate + [thioredoxin]-dithiol + H(+) = arsenite + [thioredoxin]-disulfide + H2O. Its function is as follows. Catalyzes the reduction of arsenate [As(V)] to arsenite [As(III)]. This Oceanobacillus iheyensis (strain DSM 14371 / CIP 107618 / JCM 11309 / KCTC 3954 / HTE831) protein is Arsenate reductase.